The chain runs to 347 residues: UDP-N-acetylenolpyruvoylglucosamine reductase (347 aa).

An FAD-binding PCMH-type domain is found at 16-187; sequence AIEQCSHYLV…IAVGLKLPKT (172 aa). Residue R163 is part of the active site. S233 (proton donor) is an active-site residue. E328 is a catalytic residue.

This sequence belongs to the MurB family. The cofactor is FAD.

The protein resides in the cytoplasm. The enzyme catalyses UDP-N-acetyl-alpha-D-muramate + NADP(+) = UDP-N-acetyl-3-O-(1-carboxyvinyl)-alpha-D-glucosamine + NADPH + H(+). Its pathway is cell wall biogenesis; peptidoglycan biosynthesis. Functionally, cell wall formation. In Vibrio vulnificus (strain CMCP6), this protein is UDP-N-acetylenolpyruvoylglucosamine reductase.